The primary structure comprises 232 residues: Flagellar L-ring protein (232 aa).

Residues 1 to 21 (MQKYALHAYPVMALMVATLTG) form the signal peptide. The N-palmitoyl cysteine moiety is linked to residue Cys22. Residue Cys22 is the site of S-diacylglycerol cysteine attachment.

This sequence belongs to the FlgH family. The basal body constitutes a major portion of the flagellar organelle and consists of four rings (L,P,S, and M) mounted on a central rod.

It is found in the cell outer membrane. The protein resides in the bacterial flagellum basal body. Its function is as follows. Assembles around the rod to form the L-ring and probably protects the motor/basal body from shearing forces during rotation. This chain is Flagellar L-ring protein, found in Salmonella gallinarum (strain 287/91 / NCTC 13346).